The sequence spans 226 residues: Protein DVU_0532 (226 aa).

A run of 6 helical transmembrane segments spans residues 1-23, 46-57, 73-99, 112-131, 141-164, and 194-222; these read MYAF…GLLA, AIGLQGAVQSAL, FFTV…NVIL, MGVA…MIAL, ILTT…GFLA, and LSHI…TRGP.

Requires heme b as cofactor.

Its subcellular location is the cell membrane. Its function is as follows. HMWC (high-molecular-weight cytochrome c), ORF2, ORF3, ORF4, ORF5 and ORF6 in the HMC operon form a transmembrane protein complex that allows electron flow from the periplasmic hydrogenase to the cytoplasmic enzymes that catalyze reduction of sulfates. The chain is Protein DVU_0532 from Nitratidesulfovibrio vulgaris (strain ATCC 29579 / DSM 644 / CCUG 34227 / NCIMB 8303 / VKM B-1760 / Hildenborough) (Desulfovibrio vulgaris).